A 290-amino-acid chain; its full sequence is Inorganic pyrophosphatase (290 aa).

R81 lines the diphosphate pocket. The Mg(2+) site is built by D118, D123, and D155.

The protein belongs to the PPase family. It depends on Mg(2+) as a cofactor.

The protein localises to the cytoplasm. The catalysed reaction is diphosphate + H2O = 2 phosphate + H(+). This Neurospora crassa (strain ATCC 24698 / 74-OR23-1A / CBS 708.71 / DSM 1257 / FGSC 987) protein is Inorganic pyrophosphatase (ipp-1).